The following is a 237-amino-acid chain: UDP-2,3-diacylglucosamine hydrolase (237 aa).

Asp-9, His-11, Asp-42, Asn-80, and His-115 together coordinate Mn(2+). Position 80-81 (80-81) interacts with substrate; the sequence is NR. Residues Asp-123, Ser-161, Lys-165, Lys-168, and His-196 each coordinate substrate. Mn(2+) contacts are provided by His-196 and His-198.

This sequence belongs to the LpxH family. It depends on Mn(2+) as a cofactor.

It is found in the cell inner membrane. It localises to the cytoplasm. The catalysed reaction is UDP-2-N,3-O-bis[(3R)-3-hydroxytetradecanoyl]-alpha-D-glucosamine + H2O = 2-N,3-O-bis[(3R)-3-hydroxytetradecanoyl]-alpha-D-glucosaminyl 1-phosphate + UMP + 2 H(+). It participates in glycolipid biosynthesis; lipid IV(A) biosynthesis; lipid IV(A) from (3R)-3-hydroxytetradecanoyl-[acyl-carrier-protein] and UDP-N-acetyl-alpha-D-glucosamine: step 4/6. In terms of biological role, hydrolyzes the pyrophosphate bond of UDP-2,3-diacylglucosamine to yield 2,3-diacylglucosamine 1-phosphate (lipid X) and UMP by catalyzing the attack of water at the alpha-P atom. Involved in the biosynthesis of lipid A, a phosphorylated glycolipid that anchors the lipopolysaccharide to the outer membrane of the cell. This Haemophilus influenzae (strain ATCC 51907 / DSM 11121 / KW20 / Rd) protein is UDP-2,3-diacylglucosamine hydrolase.